Here is a 138-residue protein sequence, read N- to C-terminus: Basic phospholipase A2 ammodytoxin C (138 aa).

The N-terminal stretch at 1-16 is a signal peptide; sequence MRTLWIVAVCLIGVEG. Intrachain disulfides connect C42–C131, C44–C60, C59–C111, C65–C138, C66–C104, C73–C97, and C91–C102. Residues Y43, G45, and G47 each contribute to the Ca(2+) site. Residue H63 is part of the active site. A Ca(2+)-binding site is contributed by D64. Residue D105 is part of the active site.

It belongs to the phospholipase A2 family. Group II subfamily. D49 sub-subfamily. In terms of assembly, monomer. Binds to calmodulin, coagulation factor X (F10), 14-3-3 proteins gamma (YWHAG) and epsilon (YWHAE), and R25, a mitochondrial membrane protein. May bind to M-type PLA2 receptor (R-180). Requires Ca(2+) as cofactor. Expressed by the venom gland.

It is found in the secreted. The protein localises to the host cytoplasm. It localises to the host cytosol. The enzyme catalyses a 1,2-diacyl-sn-glycero-3-phosphocholine + H2O = a 1-acyl-sn-glycero-3-phosphocholine + a fatty acid + H(+). Snake venom phospholipase A2 (PLA2) that acts as a presynaptic neurotoxin, an inhibitor of blood coagulation, and has been found to bind with high affinity to intracellular proteins. The response of indirectly stimulated neuromuscular preparations to ammodytoxin (Atx) is triphasic. The first phase, the transient inhibition of the acetylcholine (ACh) release, starts soon after the addition of Atx and lasts for several minutes. This phase is probably independent of Atx enzymatic activity. The effect may be due to the specific binding of the toxin to presynaptic receptors. These receptors, called N-type receptors, are still unidentified. It is noteworthy that a neuronal isoform of the M-type PLA2 receptor (R180) has been identified as a high-affinity receptor for Atx in neuronal plasma membranes. It was demonstrated however that this receptor is not essential for expression of neurotoxicity by Atx. The second phase corresponds to an augmentation of neurotransmitter release. A peak is reached 10-20 minutes after exposure of the preparation to Atx and is followed by a gradual reduction. In this phase, the enzymatic activity of Atx of the mammalian is not significant. It is speculated that the increased release of neurotransmitter in this phase is induced by the interference of Atx with voltage-gated potassium channels. Measurements of ionic showed however that voltage-gated potassium channels are not affected by Atx. The third phase of the response of neuromuscular preparations to Atx, which corresponds to a complete and irreversible paralysis, is clearly dependent on the hydrolytic activity of the toxin. In addition to its presynaptic neurotoxicity, Atx shows an anticoagulant activity by binding with high affinity to activated coagulation factor X (F10) thus inhibiting the formation of the prothrombinase complex (FX/FV) and its activity (IC(50) is 240 nM). Surprisingly, Atx was discovered to bind intracellular proteins such as calmodulin (CaM), 14-3-3 proteins gamma (YWHAG) and epsilon (YWHAE), as well as R25, a mitochondrial integral membrane protein found in cerebral cortex. These findings raised a doubt about the dogma of the exclusively extracellular action of PLA2s, defended by the potential instability of these molecules in the reducing environment of the eukaryotic cytosol coupled with their possible inability to act as enzymes in this cellular compartment, due to too low concentration of calcium ions. This hypothesis was challenged efficiently by demonstrating the internalization of AtxA into a culture cells, but still remains to be directly demonstrated in vivo. PLA2 catalyzes the calcium-dependent hydrolysis of the 2-acyl groups in 3-sn-phosphoglycerides. This is Basic phospholipase A2 ammodytoxin C from Vipera ammodytes ammodytes (Western sand viper).